An 85-amino-acid chain; its full sequence is CDC42 small effector protein 2 (85 aa).

2 S-palmitoyl cysteine lipidation sites follow: Cys-10 and Cys-11. In terms of domain architecture, CRIB spans 29–42 (IGEPTNFVHTAHVG).

This sequence belongs to the CDC42SE/SPEC family.

It localises to the cytoplasm. Its subcellular location is the cytoskeleton. It is found in the cell membrane. Probably involved in the organization of the actin cytoskeleton by acting downstream of CDC42, inducing actin filament assembly. The chain is CDC42 small effector protein 2 (cdc42se2) from Danio rerio (Zebrafish).